A 144-amino-acid polypeptide reads, in one-letter code: MRQTTFVKHQEVKQKWFVIDAESKILGRLAAFVASRLRGKHYPHFTPNVDMGDKIIIINAEKILLTAKKEEQKLYYNHSGYPGGLRVRTAREMRAKKPIALLERAIYGMIPHTKLGDKQRKNLYVYSGSEHPHLGQNPEKLEVK.

It belongs to the universal ribosomal protein uL13 family. As to quaternary structure, part of the 50S ribosomal subunit.

Its function is as follows. This protein is one of the early assembly proteins of the 50S ribosomal subunit, although it is not seen to bind rRNA by itself. It is important during the early stages of 50S assembly. This chain is Large ribosomal subunit protein uL13, found in Mesomycoplasma hyopneumoniae (strain 7448) (Mycoplasma hyopneumoniae).